The following is a 328-amino-acid chain: MSHSLRVIFAGTPEFAAAALAAIHSAGFQVPLVLTQPDRPAGRGMKLQASPVKRYAQEHGLAVAQPPSLRRVGKYPAEAAAAIDQLRATPHDVMVVAAYGLILPQEVLDIPLLGCINIHASLLPRWRGAAPIHRAIEAGDAETGITLMQMDVGLDTGAMISEARTAITADDTTATLHDRLAQDGAKLIVEALIELERTGKLAATPQPAEGVTYAEKIGKHEAALDWRRPAAVLARQVRAFDPFPGGVATLEDGTSIKLWAAVARDTQANGAPGTITDVSPEGVVVACGEGALRLTQLQKPGGKRLPVREFLAGSTLAVGQRFQLPETK.

121 to 124 (SLLP) contributes to the (6S)-5,6,7,8-tetrahydrofolate binding site.

This sequence belongs to the Fmt family.

It carries out the reaction L-methionyl-tRNA(fMet) + (6R)-10-formyltetrahydrofolate = N-formyl-L-methionyl-tRNA(fMet) + (6S)-5,6,7,8-tetrahydrofolate + H(+). Its function is as follows. Attaches a formyl group to the free amino group of methionyl-tRNA(fMet). The formyl group appears to play a dual role in the initiator identity of N-formylmethionyl-tRNA by promoting its recognition by IF2 and preventing the misappropriation of this tRNA by the elongation apparatus. The sequence is that of Methionyl-tRNA formyltransferase from Paraburkholderia phytofirmans (strain DSM 17436 / LMG 22146 / PsJN) (Burkholderia phytofirmans).